Consider the following 424-residue polypeptide: 3-phosphoshikimate 1-carboxyvinyltransferase (424 aa).

Residues Lys21, Ser22, and Arg26 each contribute to the 3-phosphoshikimate site. Lys21 lines the phosphoenolpyruvate pocket. Gly91 and Arg119 together coordinate phosphoenolpyruvate. Residues Ser164, Gln166, Asp310, and Lys337 each contribute to the 3-phosphoshikimate site. Gln166 is a binding site for phosphoenolpyruvate. The active-site Proton acceptor is the Asp310. 2 residues coordinate phosphoenolpyruvate: Arg341 and Arg382.

The protein belongs to the EPSP synthase family. In terms of assembly, monomer.

It localises to the cytoplasm. It carries out the reaction 3-phosphoshikimate + phosphoenolpyruvate = 5-O-(1-carboxyvinyl)-3-phosphoshikimate + phosphate. The protein operates within metabolic intermediate biosynthesis; chorismate biosynthesis; chorismate from D-erythrose 4-phosphate and phosphoenolpyruvate: step 6/7. In terms of biological role, catalyzes the transfer of the enolpyruvyl moiety of phosphoenolpyruvate (PEP) to the 5-hydroxyl of shikimate-3-phosphate (S3P) to produce enolpyruvyl shikimate-3-phosphate and inorganic phosphate. This Campylobacter hominis (strain ATCC BAA-381 / DSM 21671 / CCUG 45161 / LMG 19568 / NCTC 13146 / CH001A) protein is 3-phosphoshikimate 1-carboxyvinyltransferase.